The chain runs to 199 residues: Recombination protein RecR (199 aa).

The C4-type zinc-finger motif lies at 56 to 71; the sequence is CSICFNWSAEDPCEIC. The Toprim domain maps to 79–174; it reads STWCVVADVK…GLRMTRLAFG (96 aa).

It belongs to the RecR family.

May play a role in DNA repair. It seems to be involved in an RecBC-independent recombinational process of DNA repair. It may act with RecF and RecO. In Synechococcus sp. (strain JA-3-3Ab) (Cyanobacteria bacterium Yellowstone A-Prime), this protein is Recombination protein RecR.